Consider the following 141-residue polypeptide: Large ribosomal subunit protein uL11 (141 aa).

The protein belongs to the universal ribosomal protein uL11 family. As to quaternary structure, part of the ribosomal stalk of the 50S ribosomal subunit. Interacts with L10 and the large rRNA to form the base of the stalk. L10 forms an elongated spine to which L12 dimers bind in a sequential fashion forming a multimeric L10(L12)X complex. In terms of processing, one or more lysine residues are methylated.

Functionally, forms part of the ribosomal stalk which helps the ribosome interact with GTP-bound translation factors. The protein is Large ribosomal subunit protein uL11 of Nautilia profundicola (strain ATCC BAA-1463 / DSM 18972 / AmH).